The primary structure comprises 521 residues: UDP-N-acetylmuramoyl-L-alanyl-D-glutamate--2,6-diaminopimelate ligase (521 aa).

Serine 33 lines the UDP-N-acetyl-alpha-D-muramoyl-L-alanyl-D-glutamate pocket. 116–122 lines the ATP pocket; it reads GTNGKTT. UDP-N-acetyl-alpha-D-muramoyl-L-alanyl-D-glutamate is bound by residues 158–159, serine 185, glutamine 191, and arginine 193; that span reads TT. Lysine 225 bears the N6-carboxylysine mark. Residues arginine 409, 433-436, glycine 483, and glutamate 487 each bind meso-2,6-diaminopimelate; that span reads DNPR. The Meso-diaminopimelate recognition motif signature appears at 433–436; sequence DNPR.

The protein belongs to the MurCDEF family. MurE subfamily. Mg(2+) serves as cofactor. Post-translationally, carboxylation is probably crucial for Mg(2+) binding and, consequently, for the gamma-phosphate positioning of ATP.

It localises to the cytoplasm. It carries out the reaction UDP-N-acetyl-alpha-D-muramoyl-L-alanyl-D-glutamate + meso-2,6-diaminopimelate + ATP = UDP-N-acetyl-alpha-D-muramoyl-L-alanyl-gamma-D-glutamyl-meso-2,6-diaminopimelate + ADP + phosphate + H(+). It participates in cell wall biogenesis; peptidoglycan biosynthesis. In terms of biological role, catalyzes the addition of meso-diaminopimelic acid to the nucleotide precursor UDP-N-acetylmuramoyl-L-alanyl-D-glutamate (UMAG) in the biosynthesis of bacterial cell-wall peptidoglycan. This chain is UDP-N-acetylmuramoyl-L-alanyl-D-glutamate--2,6-diaminopimelate ligase, found in Nitrosomonas europaea (strain ATCC 19718 / CIP 103999 / KCTC 2705 / NBRC 14298).